We begin with the raw amino-acid sequence, 175 residues long: Large ribosomal subunit protein uL10 (175 aa).

This sequence belongs to the universal ribosomal protein uL10 family. As to quaternary structure, part of the ribosomal stalk of the 50S ribosomal subunit. The N-terminus interacts with L11 and the large rRNA to form the base of the stalk. The C-terminus forms an elongated spine to which L12 dimers bind in a sequential fashion forming a multimeric L10(L12)X complex.

Its function is as follows. Forms part of the ribosomal stalk, playing a central role in the interaction of the ribosome with GTP-bound translation factors. This Xylella fastidiosa (strain 9a5c) protein is Large ribosomal subunit protein uL10 (rplJ).